Here is a 236-residue protein sequence, read N- to C-terminus: Thiamine import ATP-binding protein ThiQ (236 aa).

Positions 2 to 230 (LKLEKITYLY…SAAKASVLGI (229 aa)) constitute an ABC transporter domain. 32-39 (GPSGAGKS) is a binding site for ATP.

It belongs to the ABC transporter superfamily. Thiamine importer (TC 3.A.1.19.1) family. The complex is composed of two ATP-binding proteins (ThiQ), two transmembrane proteins (ThiP) and a solute-binding protein (ThiB).

It localises to the cell inner membrane. It carries out the reaction thiamine(out) + ATP + H2O = thiamine(in) + ADP + phosphate + H(+). Functionally, part of the ABC transporter complex ThiBPQ involved in thiamine import. Responsible for energy coupling to the transport system. This chain is Thiamine import ATP-binding protein ThiQ, found in Yersinia pestis bv. Antiqua (strain Antiqua).